We begin with the raw amino-acid sequence, 329 residues long: MNNGMQIFDYEDIQMIPNKCVVQSRKEVDTSVKFGPHTFKIPVVPANMQTIIDEPLAIWLAEHDYFYIMHRFQPERRMDFVRDMKKRGLIASISVGVKDDEFDFIEALAANELTPDYITIDIAHGYAQVVIDMIQHIKHYLPNAFVIAGNVGTPEAVRELENAGADATKVGIGPGKVCITKLKTGFGTGGWQLAAVRWCAKAARKPIIADGGIRNNGDIAKSIRFGATMCMIGSLFAGHEETPGKHVNIDGKEYQEYYGSASEYQKGTHHNVEGKKILLPVKGKIGDTLKEMQEDLQSAVSYAGGRDLESLTKVDYVIVKNSIFNGDQY.

Residue Cys178 is the Thioimidate intermediate of the active site. An NADP(+)-binding site is contributed by 207 to 230; it reads IIADGGIRNNGDIAKSIRFGATMC.

It belongs to the IMPDH/GMPR family. GuaC type 2 subfamily.

The enzyme catalyses IMP + NH4(+) + NADP(+) = GMP + NADPH + 2 H(+). Its function is as follows. Catalyzes the irreversible NADPH-dependent deamination of GMP to IMP. It functions in the conversion of nucleobase, nucleoside and nucleotide derivatives of G to A nucleotides, and in maintaining the intracellular balance of A and G nucleotides. This Lacticaseibacillus paracasei (strain ATCC 334 / BCRC 17002 / CCUG 31169 / CIP 107868 / KCTC 3260 / NRRL B-441) (Lactobacillus paracasei) protein is GMP reductase.